The chain runs to 205 residues: Urease accessory protein UreE (205 aa).

Positions 171–205 (AHEAHPHAHSHAGGHGHVHSGHGHGGKHGEHDAES) are disordered. Positions 177 to 196 (HAHSHAGGHGHVHSGHGHGG) are enriched in basic residues.

Belongs to the UreE family.

The protein resides in the cytoplasm. Functionally, involved in urease metallocenter assembly. Binds nickel. Probably functions as a nickel donor during metallocenter assembly. The sequence is that of Urease accessory protein UreE from Bordetella bronchiseptica (strain ATCC BAA-588 / NCTC 13252 / RB50) (Alcaligenes bronchisepticus).